A 91-amino-acid chain; its full sequence is MALDSAKKQEIVTKFGRGENDTGSSEVQIALLTKRISDLTEHLKVFKKDHASRLGLLKLVGQRRRLMRYFKRKDKDAYLKLVAELGIRDNI.

The protein belongs to the universal ribosomal protein uS15 family. In terms of assembly, part of the 30S ribosomal subunit. Forms a bridge to the 50S subunit in the 70S ribosome, contacting the 23S rRNA.

Its function is as follows. One of the primary rRNA binding proteins, it binds directly to 16S rRNA where it helps nucleate assembly of the platform of the 30S subunit by binding and bridging several RNA helices of the 16S rRNA. In terms of biological role, forms an intersubunit bridge (bridge B4) with the 23S rRNA of the 50S subunit in the ribosome. The protein is Small ribosomal subunit protein uS15 of Sulfurimonas denitrificans (strain ATCC 33889 / DSM 1251) (Thiomicrospira denitrificans (strain ATCC 33889 / DSM 1251)).